A 142-amino-acid polypeptide reads, in one-letter code: Large ribosomal subunit protein uL13 (142 aa).

Belongs to the universal ribosomal protein uL13 family. Part of the 50S ribosomal subunit.

Its function is as follows. This protein is one of the early assembly proteins of the 50S ribosomal subunit, although it is not seen to bind rRNA by itself. It is important during the early stages of 50S assembly. This is Large ribosomal subunit protein uL13 from Vibrio parahaemolyticus serotype O3:K6 (strain RIMD 2210633).